The chain runs to 199 residues: Glycerol-3-phosphate acyltransferase (199 aa).

The next 5 helical transmembrane spans lie at 4 to 24 (LVSV…FLMG), 51 to 71 (WAAL…AYLG), 77 to 97 (EWGF…PVWL), 111 to 131 (VMLL…ALAV), and 152 to 172 (LFLL…AVVI).

The protein belongs to the PlsY family. As to quaternary structure, probably interacts with PlsX.

The protein localises to the cell membrane. It carries out the reaction an acyl phosphate + sn-glycerol 3-phosphate = a 1-acyl-sn-glycero-3-phosphate + phosphate. It functions in the pathway lipid metabolism; phospholipid metabolism. Functionally, catalyzes the transfer of an acyl group from acyl-phosphate (acyl-PO(4)) to glycerol-3-phosphate (G3P) to form lysophosphatidic acid (LPA). This enzyme utilizes acyl-phosphate as fatty acyl donor, but not acyl-CoA or acyl-ACP. The polypeptide is Glycerol-3-phosphate acyltransferase (Symbiobacterium thermophilum (strain DSM 24528 / JCM 14929 / IAM 14863 / T)).